A 272-amino-acid polypeptide reads, in one-letter code: Cytochrome c oxidase subunit 3 (272 aa).

7 helical membrane passes run 20–40 (PWPL…VLFM), 45–65 (GGGE…FTWW), 89–109 (GMIL…WAFF), 128–148 (VVAI…LSSG), 166–186 (AMQG…MQGF), 204–224 (FYMA…FLFI), and 248–268 (YWHF…WWGF).

This sequence belongs to the cytochrome c oxidase subunit 3 family. Component of the cytochrome c oxidase (complex IV, CIV), a multisubunit enzyme composed of a catalytic core of 3 subunits and several supernumerary subunits. The complex exists as a monomer or a dimer and forms supercomplexes (SCs) in the inner mitochondrial membrane with ubiquinol-cytochrome c oxidoreductase (cytochrome b-c1 complex, complex III, CIII).

The protein resides in the mitochondrion inner membrane. It carries out the reaction 4 Fe(II)-[cytochrome c] + O2 + 8 H(+)(in) = 4 Fe(III)-[cytochrome c] + 2 H2O + 4 H(+)(out). Component of the cytochrome c oxidase, the last enzyme in the mitochondrial electron transport chain which drives oxidative phosphorylation. The respiratory chain contains 3 multisubunit complexes succinate dehydrogenase (complex II, CII), ubiquinol-cytochrome c oxidoreductase (cytochrome b-c1 complex, complex III, CIII) and cytochrome c oxidase (complex IV, CIV), that cooperate to transfer electrons derived from NADH and succinate to molecular oxygen, creating an electrochemical gradient over the inner membrane that drives transmembrane transport and the ATP synthase. Cytochrome c oxidase is the component of the respiratory chain that catalyzes the reduction of oxygen to water. Electrons originating from reduced cytochrome c in the intermembrane space (IMS) are transferred via the dinuclear copper A center (CU(A)) of subunit 2 and heme A of subunit 1 to the active site in subunit 1, a binuclear center (BNC) formed by heme A3 and copper B (CU(B)). The BNC reduces molecular oxygen to 2 water molecules using 4 electrons from cytochrome c in the IMS and 4 protons from the mitochondrial matrix. This is Cytochrome c oxidase subunit 3 (COX3) from Pylaiella littoralis (Seaweed).